The following is a 145-amino-acid chain: Mannitol-specific phosphotransferase enzyme IIA component (145 aa).

The PTS EIIA type-2 domain occupies proline 4–valine 144. Catalysis depends on histidine 64, which acts as the Tele-phosphohistidine intermediate. Histidine 64 is subject to Phosphohistidine; by HPr.

It is found in the cytoplasm. The phosphoenolpyruvate-dependent sugar phosphotransferase system (sugar PTS), a major carbohydrate active transport system, catalyzes the phosphorylation of incoming sugar substrates concomitantly with their translocation across the cell membrane. The enzyme II CmtAB PTS system is involved in D-mannitol transport. This Geobacillus stearothermophilus (Bacillus stearothermophilus) protein is Mannitol-specific phosphotransferase enzyme IIA component.